A 584-amino-acid chain; its full sequence is Proline--tRNA ligase (584 aa).

The segment at 242 to 261 (APPASNPEERPATQVHDTPD) is disordered.

Belongs to the class-II aminoacyl-tRNA synthetase family. ProS type 1 subfamily. Homodimer.

It localises to the cytoplasm. The catalysed reaction is tRNA(Pro) + L-proline + ATP = L-prolyl-tRNA(Pro) + AMP + diphosphate. In terms of biological role, catalyzes the attachment of proline to tRNA(Pro) in a two-step reaction: proline is first activated by ATP to form Pro-AMP and then transferred to the acceptor end of tRNA(Pro). As ProRS can inadvertently accommodate and process non-cognate amino acids such as alanine and cysteine, to avoid such errors it has two additional distinct editing activities against alanine. One activity is designated as 'pretransfer' editing and involves the tRNA(Pro)-independent hydrolysis of activated Ala-AMP. The other activity is designated 'posttransfer' editing and involves deacylation of mischarged Ala-tRNA(Pro). The misacylated Cys-tRNA(Pro) is not edited by ProRS. The chain is Proline--tRNA ligase from Salinispora arenicola (strain CNS-205).